Reading from the N-terminus, the 258-residue chain is MLKEKMYDELILSTCRVLKLGPADFRVTDKNLFSKNPKFPLCDILLKLDFAYSLEYLLSLWEDLTKQEARFIFKNTGGAVSMSCYLHAPIKQESQNIVKECNILNVNECLSVCLNDIEAIKPSSSGVLTKCIIRRNRDAAFIVEFVAFGPESESEYIALLKAIILKKKFLERQDLEKHRAARHIKKPLRLQLKSVGEMTSFRSINYMGNTKDAAVFPVTVPIFARRNNILCGFLVAALLIVCYVIFKEFALSADFSAV.

At 1–228 (MLKEKMYDEL…TVPIFARRNN (228 aa)) the chain is on the perinuclear space side. The chain crosses the membrane as a helical span at residues 229-249 (ILCGFLVAALLIVCYVIFKEF). The Nuclear segment spans residues 250–258 (ALSADFSAV).

The protein belongs to the herpesviridae NEC2 protein family. In terms of assembly, forms a heterohexameric complex with NEC1. Post-translationally, phosphorylated.

It localises to the host nucleus inner membrane. Plays an essential role in virion nuclear egress, the first step of virion release from infected cell. Within the host nucleus, NEC1 interacts with the newly formed capsid through the vertexes and directs it to the inner nuclear membrane by associating with NEC2. Induces the budding of the capsid at the inner nuclear membrane as well as its envelopment into the perinuclear space. There, the NEC1/NEC2 complex promotes the fusion of the enveloped capsid with the outer nuclear membrane and the subsequent release of the viral capsid into the cytoplasm where it will reach the secondary budding sites in the host Golgi or trans-Golgi network. The protein is Nuclear egress protein 2 of Homo sapiens (Human).